The following is a 442-amino-acid chain: Serine protease AprX (442 aa).

In terms of domain architecture, Peptidase S8 spans 122–439; sequence KALLDTATEA…AGAVNAENSV (318 aa). Residues aspartate 155 and histidine 187 each act as charge relay system in the active site. Residues 318 to 337 form a disordered region; sequence DNNTASSDDDTVASFSSRGP. The active-site Charge relay system is the serine 384. The tract at residues 423-442 is disordered; sequence EDPNIYGAGAVNAENSVPGQ.

Belongs to the peptidase S8 family.

It localises to the cytoplasm. Its activity is regulated as follows. Is completely inhibited by phenylmethanesulphonylfluoride (PMSF) in vitro. Functionally, displays serine protease activity. Seems to have a broad substrate specificity. In Bacillus subtilis (strain 168), this protein is Serine protease AprX (aprX).